Reading from the N-terminus, the 257-residue chain is Zinc import ATP-binding protein ZnuC (257 aa).

Residues 6–221 (VRLEQITVAF…AFVETFGHQV (216 aa)) form the ABC transporter domain. 38 to 45 (GPNGAGKT) is an ATP binding site.

It belongs to the ABC transporter superfamily. Zinc importer (TC 3.A.1.15.5) family. As to quaternary structure, the complex is composed of two ATP-binding proteins (ZnuC), two transmembrane proteins (ZnuB) and a solute-binding protein (ZnuA).

Its subcellular location is the cell inner membrane. The enzyme catalyses Zn(2+)(out) + ATP(in) + H2O(in) = Zn(2+)(in) + ADP(in) + phosphate(in) + H(+)(in). Functionally, part of the ABC transporter complex ZnuABC involved in zinc import. Responsible for energy coupling to the transport system. This chain is Zinc import ATP-binding protein ZnuC, found in Marinobacter nauticus (strain ATCC 700491 / DSM 11845 / VT8) (Marinobacter aquaeolei).